The chain runs to 1803 residues: Pyruvate dehydrogenase [NADP(+)], mitochondrial (1803 aa).

Residues 1-37 constitute a mitochondrion transit peptide; it reads MKQSVRPIISNVLRKEVALYSTIIGQDKGKEPTGRTY. 4Fe-4S ferredoxin-type domains follow at residues 747 to 776 and 802 to 831; these read FIPQWIPANCTQCNYCSYVCPHATIRPFVL and FRIQVAPEDCTGCQVCVETCPDDALEMTDA. 8 residues coordinate [4Fe-4S] cluster: C756, C759, C762, C766, C811, C814, C817, and C821. The Flavodoxin-like domain occupies 1248 to 1391; it reads VTILYGSETG…GFNNWIPSVW (144 aa). An FAD-binding FR-type domain is found at 1425-1650; it reads KSTPVLSITG…IHPTAMEFPD (226 aa). Residues 1458 to 1469 and 1585 to 1595 each bind FAD; these read YQVGDSLGVFPE and IKPRYYSISSA.

It in the N-terminal section; belongs to the pyruvate:ferredoxin/flavodoxin oxidoreductase family. As to quaternary structure, homodimer. The cofactor is FAD. FMN is required as a cofactor. Thiamine diphosphate serves as cofactor. Requires iron-sulfur cluster as cofactor.

The protein resides in the mitochondrion. The catalysed reaction is pyruvate + NADP(+) + CoA = acetyl-CoA + CO2 + NADPH. Pyruvate dehydrogenase [NADP(+)] is one of three enzymes participating in respiratory metabolism. The enzyme is also active with 2-oxobutyrate and oxaloacetate. The enzyme is oxygen sensitive. The chain is Pyruvate dehydrogenase [NADP(+)], mitochondrial (PNO) from Euglena gracilis.